Here is a 295-residue protein sequence, read N- to C-terminus: Fatty acid desaturase 4-like 1, chloroplastic (295 aa).

The transit peptide at 1-29 (MAVSFQTKNPLRPITNIPRSYGPTRVRVT) directs the protein to the chloroplast. Helical transmembrane passes span 72-92 (WVAA…IGGF), 102-122 (LACY…HWAI), and 175-195 (LAIN…CILL).

The protein belongs to the fatty acid desaturase CarF family.

The protein localises to the plastid. Its subcellular location is the chloroplast membrane. The protein operates within lipid metabolism; fatty acid metabolism. Functionally, fatty acid desaturase involved in the production of chloroplast-specific phosphatidylglycerol molecular species. Catalyzes the formation of a trans double bond introduced close to the carboxyl group of palmitic acid, which is specifically esterified to the sn-2 glyceryl carbon of phosphatidylglycerol. The polypeptide is Fatty acid desaturase 4-like 1, chloroplastic (FAD4L1) (Arabidopsis thaliana (Mouse-ear cress)).